Here is a 118-residue protein sequence, read N- to C-terminus: UPF0344 protein YisL (118 aa).

Transmembrane regions (helical) follow at residues 4 to 24, 33 to 53, 62 to 82, and 93 to 113; these read LHIT…SLYS, ITHM…AELF, EYAG…MLLI, and LWVG…HLPI.

This sequence belongs to the UPF0344 family.

The protein resides in the cell membrane. The sequence is that of UPF0344 protein YisL (yisL) from Bacillus subtilis (strain 168).